We begin with the raw amino-acid sequence, 126 residues long: Phosphoribosyl-AMP cyclohydrolase (126 aa).

Aspartate 82 is a Mg(2+) binding site. Cysteine 83 is a Zn(2+) binding site. Mg(2+) contacts are provided by aspartate 84 and aspartate 86. Zn(2+) contacts are provided by cysteine 99 and cysteine 106.

It belongs to the PRA-CH family. Homodimer. The cofactor is Mg(2+). Zn(2+) serves as cofactor.

The protein resides in the cytoplasm. The enzyme catalyses 1-(5-phospho-beta-D-ribosyl)-5'-AMP + H2O = 1-(5-phospho-beta-D-ribosyl)-5-[(5-phospho-beta-D-ribosylamino)methylideneamino]imidazole-4-carboxamide. It functions in the pathway amino-acid biosynthesis; L-histidine biosynthesis; L-histidine from 5-phospho-alpha-D-ribose 1-diphosphate: step 3/9. In terms of biological role, catalyzes the hydrolysis of the adenine ring of phosphoribosyl-AMP. The polypeptide is Phosphoribosyl-AMP cyclohydrolase (Micrococcus luteus (strain ATCC 4698 / DSM 20030 / JCM 1464 / CCM 169 / CCUG 5858 / IAM 1056 / NBRC 3333 / NCIMB 9278 / NCTC 2665 / VKM Ac-2230) (Micrococcus lysodeikticus)).